The sequence spans 263 residues: uncharacterized protein (263 aa).

The first 22 residues, 1-22 (MEYLKRLALFISVIILTIFIMG), serve as a signal peptide directing secretion. A lipid anchor (N-palmitoyl cysteine) is attached at cysteine 23. Cysteine 23 carries S-diacylglycerol cysteine lipidation.

The protein belongs to the staphylococcal tandem lipoprotein family.

It localises to the cell membrane. This is an uncharacterized protein from Staphylococcus aureus (strain MSSA476).